The sequence spans 98 residues: NADH-ubiquinone oxidoreductase chain 4L (98 aa).

A run of 3 helical transmembrane segments spans residues 1–21 (MSMV…GLLM), 29–49 (SLLC…VAIL), and 61–81 (IILL…LVMV).

The protein belongs to the complex I subunit 4L family. In terms of assembly, core subunit of respiratory chain NADH dehydrogenase (Complex I) which is composed of 45 different subunits.

It localises to the mitochondrion inner membrane. It carries out the reaction a ubiquinone + NADH + 5 H(+)(in) = a ubiquinol + NAD(+) + 4 H(+)(out). Functionally, core subunit of the mitochondrial membrane respiratory chain NADH dehydrogenase (Complex I) which catalyzes electron transfer from NADH through the respiratory chain, using ubiquinone as an electron acceptor. Part of the enzyme membrane arm which is embedded in the lipid bilayer and involved in proton translocation. The chain is NADH-ubiquinone oxidoreductase chain 4L (MT-ND4L) from Puma concolor (Mountain lion).